The following is a 159-amino-acid chain: Phosphopantetheine adenylyltransferase (159 aa).

Threonine 10 serves as a coordination point for substrate. ATP-binding positions include 10–11 (TF) and histidine 18. Positions 42, 74, and 88 each coordinate substrate. ATP is bound by residues 89–91 (GLR), glutamate 99, and 124–130 (WSFISSS).

The protein belongs to the bacterial CoaD family. In terms of assembly, homohexamer. Requires Mg(2+) as cofactor.

It localises to the cytoplasm. The catalysed reaction is (R)-4'-phosphopantetheine + ATP + H(+) = 3'-dephospho-CoA + diphosphate. It participates in cofactor biosynthesis; coenzyme A biosynthesis; CoA from (R)-pantothenate: step 4/5. Functionally, reversibly transfers an adenylyl group from ATP to 4'-phosphopantetheine, yielding dephospho-CoA (dPCoA) and pyrophosphate. The sequence is that of Phosphopantetheine adenylyltransferase from Pectobacterium carotovorum subsp. carotovorum (strain PC1).